The chain runs to 502 residues: Cytochrome P450 71A1 (502 aa).

The chain crosses the membrane as a helical span at residues 7 to 21 (LLFLAIALTFFLLKL). C443 lines the heme pocket.

Belongs to the cytochrome P450 family. Heme is required as a cofactor. As to expression, mesocarp.

The protein localises to the microsome membrane. It localises to the endoplasmic reticulum membrane. Functionally, involved in the metabolism of compounds associated with the development of flavor in the ripening fruit process, possibly by acting as trans-cinnamic acid 4-hydrolase. The polypeptide is Cytochrome P450 71A1 (CYP71A1) (Persea americana (Avocado)).